Reading from the N-terminus, the 146-residue chain is Fluoride-specific ion channel FluC (146 aa).

The next 4 membrane-spanning stretches (helical) occupy residues 8-28 (FAIALGGSIGAVLRYLITLTV), 47-67 (LANLLGCCALGGLFQFSQALV), 91-111 (IGVLGSLTTFSTLIGETAVFA), and 121-141 (MLLGINVIAGWCLFWAAAAVV). The Na(+) site is built by G95 and T98.

The protein belongs to the fluoride channel Fluc/FEX (TC 1.A.43) family.

The protein resides in the cell inner membrane. It carries out the reaction fluoride(in) = fluoride(out). With respect to regulation, na(+) is not transported, but it plays an essential structural role and its presence is essential for fluoride channel function. In terms of biological role, fluoride-specific ion channel. Important for reducing fluoride concentration in the cell, thus reducing its toxicity. In Rhodopirellula baltica (strain DSM 10527 / NCIMB 13988 / SH1), this protein is Fluoride-specific ion channel FluC.